We begin with the raw amino-acid sequence, 712 residues long: Voltage-gated chloride channel TMC4 (712 aa).

The disordered stretch occupies residues 1 to 39 (MEENPTLESEAWGSSRGWLAPREARGAPCSSPGPSLSSV). The Extracellular segment spans residues 1-168 (MEENPTLESE…GTESYFSLLR (168 aa)). The N-linked (GlcNAc...) asparagine glycan is linked to N107. Residues 169 to 189 (FLLLLNVLASVLMACMTLLPT) form a helical membrane-spanning segment. Over 190–249 (WLGGAPPGPPGPDISSPCGSYNPHSQGLVTFATQLFNLLSGEGYLEWSPLFYGFYPPRPR) the chain is Cytoplasmic. Residues 250–270 (LAVTYLCWAFAVGLICLLLIL) traverse the membrane as a helical segment. Over 271 to 348 (HRSVSGLKQT…GQQARVWLVR (78 aa)) the chain is Extracellular. Residues 349–369 (VLLNLLVVALLGAAFYGVYWA) traverse the membrane as a helical segment. At 370–394 (TGCTVELQEMPLVQELPLLKLGVNY) the chain is on the cytoplasmic side. The chain crosses the membrane as a helical span at residues 395 to 415 (LPSIFIAGVNFVLPPVFKLIA). Residues 416–425 (PLEGYTRSRQ) lie on the Extracellular side of the membrane. Residues 426–446 (IVFILLRTVFLRLASLVVLLF) traverse the membrane as a helical segment. Over 447-483 (SLWNQITCGGDSEAEDCKTCGYNYKQLPCWETVLGQE) the chain is Cytoplasmic. A helical transmembrane segment spans residues 484–504 (MYKLLLFDLLTVLAVALLIQF). Residues 505–542 (PRKLLCGLCPGALGRLAGTQEFQVPDEVLGLIYAQTVV) are Extracellular-facing. A helical transmembrane segment spans residues 543 to 565 (WVGSFFCPLLPLLNTVKFLLLFY). Topologically, residues 566–592 (LKKLTLFSTCSPAARTFRASAANFFFP) are cytoplasmic. A helical transmembrane segment spans residues 593 to 613 (LVLLLGLAISSVPLLYSIFLI). Topologically, residues 614–654 (PPSKLCGPFRGQSSIWAQIPESISSLPETTQNFLFFLGTQA) are extracellular. A helical transmembrane segment spans residues 655–677 (FAVPLLLISSILMAYTVALANSY). Residues 678–712 (GRLISELKRQRQTEAQNKVFLARRAVALTSTKPAL) lie on the Cytoplasmic side of the membrane.

It belongs to the TMC family.

It is found in the membrane. The enzyme catalyses chloride(in) = chloride(out). Its function is as follows. Voltage-gated chloride channel involved in high-concentration salt taste sensation. Depolarization induced by high NaCl concentration may trigger the activation of TMC4-mediated chloride influx into taste bud cells, helping the return to resting potential. Also allows permeation of organic anions including gluconate, but their current amplitudes at positive potentials are less than that of chloride. Involved in pH and temperature-dependent modulation of salty taste. This Homo sapiens (Human) protein is Voltage-gated chloride channel TMC4.